The sequence spans 262 residues: Spindlin-1 (262 aa).

The tract at residues 1–49 is disordered; that stretch reads MKTPFGKTPGQRSRADAGHAGVSANMMKKRTSHKKHRTSVGPSKPVSQP. Residues Lys7 and Lys28 each participate in a glycyl lysine isopeptide (Lys-Gly) (interchain with G-Cter in SUMO2) cross-link. Over residues 27 to 38 the composition is skewed to basic residues; sequence MKKRTSHKKHRT. Position 44 is an N6-acetyllysine; alternate (Lys44). Lys44 participates in a covalent cross-link: Glycyl lysine isopeptide (Lys-Gly) (interchain with G-Cter in SUMO2); alternate. The tudor-like domain 1 stretch occupies residues 53–116; it reads IVGCRIQHGW…RVSALEVLPD (64 aa). The tract at residues 93 to 98 is histone H3K4me3 and H3R8me2a binding; sequence GFDCVY. Phosphoserine; by AURKA occurs at positions 109 and 124. Residues 132–193 are tudor-like domain 2; the sequence is MIGKAVEHMF…DYKEGDLRIM (62 aa). Glu142 is a region of interest (histone H3K4me3 and H3R8me2a binding). Position 199 is a phosphoserine (Ser199). Positions 213-262 are tudor-like domain 3; the sequence is LVGKQVEYAKEDGSKRTGMVIHQVEAKPSVYFIKFDDDFHIYVYDLVKTS. Residues 250–252 are histone H3K4me3 and H3R8me2a binding; sequence DFH.

Belongs to the SPIN/STSY family. As to quaternary structure, homodimer; may form higher-order oligomers. Interacts with TCF7L2/TCF4; the interaction is direct. Interacts with HABP4 and SERBP1. Interacts with SPINDOC; SPINDOC stabilizes SPIN1 and enhances its association with bivalent H3K4me3K9me3 mark. Interacts with SPOCD1; promoting recruitment of PIWIL4 and SPOCD1 to transposons. In terms of processing, phosphorylated during oocyte meiotic maturation.

It localises to the nucleus. The protein localises to the nucleolus. Chromatin reader that specifically recognizes and binds histone H3 both trimethylated at 'Lys-4' and 'Lys-9' (H3K4me3K9me3) and is involved in piRNA-mediated retrotransposon silencing during spermatogenesis. Plays a key role in the initiation of the PIWIL4-piRNA pathway, a pathway that directs transposon DNA methylation and silencing in the male embryonic germ cells, by promoting recruitment of DNA methylation machinery to transposons: binds young, but not old, LINE1 transposons, which are specifically marked with H3K4me3K9me3, and promotes the recruitment of PIWIL4 and SPOCD1 to transposons, leading to piRNA-directed DNA methylation. Also recognizes and binds histone H3 both trimethylated at 'Lys-4' and asymmetrically dimethylated at 'Arg-8' (H3K4me3 and H3R8me2a) and acts as an activator of Wnt signaling pathway downstream of PRMT2. Overexpression induces metaphase arrest and chromosomal instability. Overexpression induces metaphase arrest and chromosomal instability. Localizes to active rDNA loci and promotes the expression of rRNA genes. May play a role in cell-cycle regulation during the transition from gamete to embryo. Involved in oocyte meiotic resumption, a process that takes place before ovulation to resume meiosis of oocytes blocked in prophase I: may act by regulating maternal transcripts to control meiotic resumption. The protein is Spindlin-1 (Spin1) of Rattus norvegicus (Rat).